Here is a 332-residue protein sequence, read N- to C-terminus: Isopentenyl-diphosphate delta-isomerase (332 aa).

Substrate is bound at residue 6–7; that stretch reads RK. Residues 65-67, Ser-95, and Asn-123 each bind FMN; that span reads AMT. 95–97 contacts substrate; the sequence is SGR. Gln-157 serves as a coordination point for substrate. Glu-158 serves as a coordination point for Mg(2+). Residues Lys-187, Thr-217, 264-266, Ala-285, and 285-286 each bind FMN; these read GVY and AR.

It belongs to the IPP isomerase type 2 family. In terms of assembly, homooctamer. Dimer of tetramers. FMN serves as cofactor. It depends on NADPH as a cofactor. Requires Mg(2+) as cofactor.

Its subcellular location is the cytoplasm. The catalysed reaction is isopentenyl diphosphate = dimethylallyl diphosphate. With respect to regulation, competitively inhibited by N,N-dimethyl-2-amino-1-ethyl diphosphate (NIPP) and isopentyl diphosphate. Functionally, involved in the biosynthesis of isoprenoids. Catalyzes the 1,3-allylic rearrangement of the homoallylic substrate isopentenyl (IPP) to its allylic isomer, dimethylallyl diphosphate (DMAPP). This Thermus thermophilus (strain ATCC BAA-163 / DSM 7039 / HB27) protein is Isopentenyl-diphosphate delta-isomerase.